The chain runs to 102 residues: Small ribosomal subunit protein eS24 (102 aa).

The disordered stretch occupies residues 70 to 102; that stretch reads VYDSPAQAAEVEHDHMLERNKIGADDADAEEAE. The span at 79 to 93 shows a compositional bias: basic and acidic residues; sequence EVEHDHMLERNKIGA.

It belongs to the eukaryotic ribosomal protein eS24 family.

This is Small ribosomal subunit protein eS24 from Halobacterium salinarum (strain ATCC 29341 / DSM 671 / R1).